Reading from the N-terminus, the 98-residue chain is Large ribosomal subunit protein bL27 (98 aa).

Positions 1-10 (MELKMNLQLF) are excised as a propeptide. Positions 11 to 30 (AQKKGTGSSKNGRDSISKRL) are disordered.

Belongs to the bacterial ribosomal protein bL27 family. In terms of processing, the N-terminus is cleaved by ribosomal processing cysteine protease Prp.

This is Large ribosomal subunit protein bL27 from Natranaerobius thermophilus (strain ATCC BAA-1301 / DSM 18059 / JW/NM-WN-LF).